The chain runs to 66 residues: Beta-toxin Chui2 (66 aa).

Positions 1–66 constitute an LCN-type CS-alpha/beta domain; it reads KEGYIVNSYT…VWPLKNKTCN (66 aa). 4 cysteine pairs are disulfide-bonded: cysteine 12–cysteine 65, cysteine 16–cysteine 41, cysteine 25–cysteine 46, and cysteine 29–cysteine 48. Position 66 is an asparagine amide (asparagine 66).

Belongs to the long (4 C-C) scorpion toxin superfamily. Sodium channel inhibitor family. Beta subfamily. In terms of tissue distribution, expressed by the venom gland.

It is found in the secreted. Beta toxins bind voltage-independently at site-4 of sodium channels (Nav) and shift the voltage of activation toward more negative potentials thereby affecting sodium channel activation and promoting spontaneous and repetitive firing. The polypeptide is Beta-toxin Chui2 (Centruroides huichol (Scorpion)).